The following is a 187-amino-acid chain: MATPEFDLGDIKRRMQGAVSSLSKDLGSLRTGRATPSLLDPIQVEAYGSSMPMAQVATVSVPEPRLLSISVWDRSMVTNVEKAIRESDLGLNPMTEGQTIRLRIPEMNEQRRKEMVKVAHKYTEEARVAVRHVRRDGLDILKKLEKDGAISQDDEKRQAAEVQKATDDAINEIDGVLASKEKEIMQV.

The protein belongs to the RRF family.

The protein localises to the cytoplasm. Its function is as follows. Responsible for the release of ribosomes from messenger RNA at the termination of protein biosynthesis. May increase the efficiency of translation by recycling ribosomes from one round of translation to another. This chain is Ribosome-recycling factor, found in Methylorubrum extorquens (strain CM4 / NCIMB 13688) (Methylobacterium extorquens).